A 484-amino-acid chain; its full sequence is Aldehyde dehydrogenase family 3 member H1 (484 aa).

Gly-196–Gly-201 contributes to the NAD(+) binding site. Residue Glu-218 is the Proton acceptor of the active site. The active-site Nucleophile is Cys-253.

This sequence belongs to the aldehyde dehydrogenase family. Homodimer and homomultimer. In terms of tissue distribution, isoform alpha is expressed in expanded leaves and flowers. Detected in seedlings. Isoform beta is mainly expressed in flowers. Detected in leaves and seedlings.

The enzyme catalyses an aldehyde + NAD(+) + H2O = a carboxylate + NADH + 2 H(+). With respect to regulation, thiol-based regulation. Inactivation after dimerization under oxidizing conditions. Its function is as follows. Involved in oxidative stress tolerance by detoxifying reactive aldehydes derived from lipid peroxidation. Medium- to long-chain saturated aldehydes are preferred substrates, while the short-chain aldehyde propanal is a weak substrate. Is strictely NAD(+) specific. The protein is Aldehyde dehydrogenase family 3 member H1 (ALDH3H1) of Arabidopsis thaliana (Mouse-ear cress).